Consider the following 236-residue polypeptide: 2-C-methyl-D-erythritol 4-phosphate cytidylyltransferase (236 aa).

This sequence belongs to the IspD/TarI cytidylyltransferase family. IspD subfamily.

It catalyses the reaction 2-C-methyl-D-erythritol 4-phosphate + CTP + H(+) = 4-CDP-2-C-methyl-D-erythritol + diphosphate. Its pathway is isoprenoid biosynthesis; isopentenyl diphosphate biosynthesis via DXP pathway; isopentenyl diphosphate from 1-deoxy-D-xylulose 5-phosphate: step 2/6. Catalyzes the formation of 4-diphosphocytidyl-2-C-methyl-D-erythritol from CTP and 2-C-methyl-D-erythritol 4-phosphate (MEP). The sequence is that of 2-C-methyl-D-erythritol 4-phosphate cytidylyltransferase from Symbiobacterium thermophilum (strain DSM 24528 / JCM 14929 / IAM 14863 / T).